A 305-amino-acid chain; its full sequence is Putative glutamine amidotransferase MTH_191 (305 aa).

Cys-2 is an active-site residue. The region spanning 2–305 (CGIAGVVYKD…SPGEVRVYEI (304 aa)) is the Glutamine amidotransferase type-2 domain.

This chain is Putative glutamine amidotransferase MTH_191, found in Methanothermobacter thermautotrophicus (strain ATCC 29096 / DSM 1053 / JCM 10044 / NBRC 100330 / Delta H) (Methanobacterium thermoautotrophicum).